Consider the following 367-residue polypeptide: DNA replication and repair protein RecF (367 aa).

Position 30 to 37 (30 to 37 (GANGSGKT)) interacts with ATP.

Belongs to the RecF family.

It is found in the cytoplasm. The RecF protein is involved in DNA metabolism; it is required for DNA replication and normal SOS inducibility. RecF binds preferentially to single-stranded, linear DNA. It also seems to bind ATP. This Pseudomonas fluorescens (strain ATCC BAA-477 / NRRL B-23932 / Pf-5) protein is DNA replication and repair protein RecF.